A 531-amino-acid chain; its full sequence is MANPTHSQVVAAPDSSGRLLRLVSASSVMMQLLGKSTNIRMSQILEHHEDEDFSAHRTKIVCTMGPSCWDVDKMVQLIDAGMNVCRLNFSHGDHEAHGRVVKNLQEALKQRPGKRVALLLDTKGPEIRTGMLEGDKPIELHAGDMLKIVTDYSFVGNKSCIACSYEKLPSSVKPGNTILIADGSLSVEVVECGKDYVMTRVMNPAIIGNKKNMNLPGVKVDLPVIGEKDKNDILNFGIPMGCNFIAASFVQSADDVRYIRSILGTKGRNIKIIPKIENVEGLLNFDEILQEADGIMIARGDLGMEIPPEKVFLAQKMMISKCNVAGKPVITATQMLESMTKNPRPTRAEAADVANAVLDGTDCVMLSGETANGSFPVQAVTVMSRVCFEAEGCIDYQQVFRATCQATMTPIDTQEAVARAAVETAQSINASLILALTETGRTARLIAKYRPMQPILALSASEETIKQLQVIRGVTTFLVPTFQGTDQLIRNALSAAKELQLVSEGDSIVAVHGIKEEVAGWSNLLKVLVVE.

Arg86 provides a ligand contact to substrate. Positions 88, 90, 121, and 122 each coordinate K(+). 88-91 (NFSH) contributes to the ATP binding site. ATP-binding residues include Arg128 and Lys211. Glu277 contributes to the Mg(2+) binding site. Substrate-binding residues include Gly300, Asp301, and Thr333. Asp301 contributes to the Mg(2+) binding site.

It belongs to the pyruvate kinase family. Homotetramer. Mg(2+) is required as a cofactor. It depends on K(+) as a cofactor.

It catalyses the reaction pyruvate + ATP = phosphoenolpyruvate + ADP + H(+). Its pathway is carbohydrate degradation; glycolysis; pyruvate from D-glyceraldehyde 3-phosphate: step 5/5. This chain is Pyruvate kinase (PYK), found in Eimeria tenella (Coccidian parasite).